The chain runs to 363 residues: Cytochrome b (363 aa).

The next 4 membrane-spanning stretches (helical) occupy residues 23–43, 67–89, 102–122, and 164–184; these read VGFI…LLTF, WFVR…IHII, SWYS…TGYV, and FFIL…LHLY. Heme b is bound by residues H73 and H87. The heme b site is built by H168 and H182. H187 serves as a coordination point for a ubiquinone. Transmembrane regions (helical) follow at residues 210–230, 271–291, 309–329, and 332–352; these read ILFS…PQVG, VFPT…LLII, RVWT…GCIG, and VINL…TTFV.

This sequence belongs to the cytochrome b family. In terms of assembly, the main subunits of complex b-c1 are: cytochrome b, cytochrome c1 and the Rieske protein. Heme b serves as cofactor.

Its subcellular location is the mitochondrion inner membrane. Component of the ubiquinol-cytochrome c reductase complex (complex III or cytochrome b-c1 complex) that is part of the mitochondrial respiratory chain. The b-c1 complex mediates electron transfer from ubiquinol to cytochrome c. Contributes to the generation of a proton gradient across the mitochondrial membrane that is then used for ATP synthesis. The sequence is that of Cytochrome b (MT-CYB) from Theileria parva (East coast fever infection agent).